Consider the following 710-residue polypeptide: Protein phosphatase 1 regulatory subunit 37 (710 aa).

Pro residues predominate over residues 1–12 (MEIPPQEAPPGP). Positions 1-46 (MEIPPQEAPPGPGADADADAEAEEAPAEAGSSSGASPPTDGRLKAA) are disordered. The span at 16-26 (ADADAEAEEAP) shows a compositional bias: acidic residues. Residues 27–38 (AEAGSSSGASPP) are compositionally biased toward low complexity. Residues Ser-54 and Ser-60 each carry the phosphoserine modification. LRR repeat units lie at residues 224–244 (SLAVLHLENASLSGRPLMLLA), 252–273 (NLQELYLADNKLNGLQDSAQLG), 281–301 (SLQILDLRNNHVLDSGLAYIC), 310–330 (GLVTLVLWNNQLTHTGMAFLG), and 338–358 (SLETLNLGHNPIGNEGVRNLK). Residues 487–677 (PLEESGDLPA…APPGLEAKGS (191 aa)) form a disordered region. Over residues 512 to 531 (SDSDSDSDREEQEEEEEDQS) the composition is skewed to acidic residues. A compositionally biased stretch (low complexity) spans 543 to 565 (SSSAPCPALLPSTDSLGPGDKSP). A Phosphoserine modification is found at Ser-581. The span at 603–624 (PPVPPTSVSSPPPSPPSPPASP) shows a compositional bias: pro residues. The span at 637–649 (SEAQPQTEPSQAG) shows a compositional bias: polar residues. Low complexity predominate over residues 656 to 676 (LKPEFALALAPEAPPGLEAKG).

The protein belongs to the PPP1R37 family. As to quaternary structure, interacts with PPP1CA.

In terms of biological role, inhibits phosphatase activity of protein phosphatase 1 (PP1) complexes. The protein is Protein phosphatase 1 regulatory subunit 37 (Ppp1r37) of Rattus norvegicus (Rat).